We begin with the raw amino-acid sequence, 432 residues long: Argininosuccinate lyase (432 aa).

The protein belongs to the lyase 1 family. Argininosuccinate lyase subfamily.

It localises to the cytoplasm. It catalyses the reaction 2-(N(omega)-L-arginino)succinate = fumarate + L-arginine. It participates in amino-acid biosynthesis; L-arginine biosynthesis; L-arginine from L-ornithine and carbamoyl phosphate: step 3/3. This is Argininosuccinate lyase from Xanthomonas euvesicatoria pv. vesicatoria (strain 85-10) (Xanthomonas campestris pv. vesicatoria).